A 110-amino-acid chain; its full sequence is Large ribosomal subunit protein uL22 (110 aa).

This sequence belongs to the universal ribosomal protein uL22 family. As to quaternary structure, part of the 50S ribosomal subunit.

This protein binds specifically to 23S rRNA; its binding is stimulated by other ribosomal proteins, e.g. L4, L17, and L20. It is important during the early stages of 50S assembly. It makes multiple contacts with different domains of the 23S rRNA in the assembled 50S subunit and ribosome. Its function is as follows. The globular domain of the protein is located near the polypeptide exit tunnel on the outside of the subunit, while an extended beta-hairpin is found that lines the wall of the exit tunnel in the center of the 70S ribosome. This is Large ribosomal subunit protein uL22 from Photorhabdus laumondii subsp. laumondii (strain DSM 15139 / CIP 105565 / TT01) (Photorhabdus luminescens subsp. laumondii).